The sequence spans 108 residues: Iron-sulfur cluster assembly protein CyaY (108 aa).

Belongs to the frataxin family.

Involved in iron-sulfur (Fe-S) cluster assembly. May act as a regulator of Fe-S biogenesis. In Burkholderia cenocepacia (strain ATCC BAA-245 / DSM 16553 / LMG 16656 / NCTC 13227 / J2315 / CF5610) (Burkholderia cepacia (strain J2315)), this protein is Iron-sulfur cluster assembly protein CyaY.